Consider the following 107-residue polypeptide: U1-lycotoxin-Ls1b (107 aa).

An N-terminal signal peptide occupies residues 1-20 (MMKVLVVVALLVTLISYSSS). Residues 21 to 41 (EGIDDLEADELSSLMANEQTR) constitute a propeptide that is removed on maturation. Intrachain disulfides connect C44-C59, C51-C68, C58-C86, and C70-C84.

The protein belongs to the neurotoxin 19 (CSTX) family. 04 (U1-Lctx) subfamily. Expressed by the venom gland.

It localises to the secreted. In Lycosa singoriensis (Wolf spider), this protein is U1-lycotoxin-Ls1b.